We begin with the raw amino-acid sequence, 243 residues long: tRNA (guanine-N(1)-)-methyltransferase (243 aa).

S-adenosyl-L-methionine-binding positions include Gly113 and 133-138 (IGDFVL).

The protein belongs to the RNA methyltransferase TrmD family. In terms of assembly, homodimer.

The protein localises to the cytoplasm. It carries out the reaction guanosine(37) in tRNA + S-adenosyl-L-methionine = N(1)-methylguanosine(37) in tRNA + S-adenosyl-L-homocysteine + H(+). Specifically methylates guanosine-37 in various tRNAs. This chain is tRNA (guanine-N(1)-)-methyltransferase, found in Bacillus licheniformis (strain ATCC 14580 / DSM 13 / JCM 2505 / CCUG 7422 / NBRC 12200 / NCIMB 9375 / NCTC 10341 / NRRL NRS-1264 / Gibson 46).